Consider the following 630-residue polypeptide: Succinate dehydrogenase [ubiquinone] flavoprotein subunit, mitochondrial (630 aa).

A mitochondrion-targeting transit peptide spans 1 to 31; that stretch reads MWRGCVSRGLRSLSKGKGSSSSAPVSAAARL. FAD contacts are provided by residues 52 to 57, 75 to 90, and Asp-260; these read GAGGAG and TKLF…AQGG. His-83 carries the tele-8alpha-FAD histidine modification. Substrate contacts are provided by His-281 and Thr-293. Arg-325 serves as the catalytic Proton acceptor. A substrate-binding site is contributed by His-392. Residue Glu-426 participates in FAD binding. Residue Arg-437 participates in substrate binding. Residue 442 to 443 participates in FAD binding; that stretch reads SL.

It belongs to the FAD-dependent oxidoreductase 2 family. FRD/SDH subfamily. Component of complex II composed of eight subunits in plants: four classical SDH subunits SDH1, SDH2, SDH3 and SDH4 (a flavoprotein (FP), an iron-sulfur protein (IP), and a cytochrome b composed of a large and a small subunit.), as well as four subunits unknown in mitochondria from bacteria and heterotrophic eukaryotes. It depends on FAD as a cofactor.

Its subcellular location is the mitochondrion inner membrane. The enzyme catalyses a quinone + succinate = fumarate + a quinol. It functions in the pathway carbohydrate metabolism; tricarboxylic acid cycle; fumarate from succinate (eukaryal route): step 1/1. Flavoprotein (FP) subunit of succinate dehydrogenase (SDH) that is involved in complex II of the mitochondrial electron transport chain and is responsible for transferring electrons from succinate to ubiquinone (coenzyme Q). This chain is Succinate dehydrogenase [ubiquinone] flavoprotein subunit, mitochondrial (SDH1), found in Oryza sativa subsp. japonica (Rice).